The sequence spans 276 residues: UPF0276 protein AM1_3026 (276 aa).

It belongs to the UPF0276 family.

In Acaryochloris marina (strain MBIC 11017), this protein is UPF0276 protein AM1_3026.